Here is a 278-residue protein sequence, read N- to C-terminus: Methyltransferase GfsG (278 aa).

Residues Q105 and 128 to 129 (DA) contribute to the S-adenosyl-L-methionine site. The active-site Proton acceptor is the E146. H150 provides a ligand contact to S-adenosyl-L-methionine.

It belongs to the methyltransferase superfamily.

It functions in the pathway antibiotic biosynthesis. Functionally, methylase required for synthesis of the 16-membered macrolide antibiotics FD-891 and FD-892. In vitro uses S-adenosyl-L-methionine to methylate a number of biosynthetic intermediates in the synthesis of FD-891. The sequence is that of Methyltransferase GfsG from Streptomyces halstedii.